A 136-amino-acid polypeptide reads, in one-letter code: Histone H3.3C (136 aa).

Residues 1–10 are compositionally biased toward polar residues; sequence MALTKQTARK. Positions 1-44 are disordered; that stretch reads MALTKQTARKSTGGKAPRKQLATKATRKSAPSTGGVKKPHRYRP. Position 4 is a phosphothreonine; by HASPIN (T4). At K5 the chain carries Allysine; alternate. N6,N6,N6-trimethyllysine; alternate is present on K5. K5 is modified (N6,N6-dimethyllysine; alternate). K5 is subject to N6-(2-hydroxyisobutyryl)lysine; alternate. K5 is modified (N6-(beta-hydroxybutyryl)lysine; alternate). Position 5 is an N6-acetyllysine; alternate (K5). K5 bears the N6-methyllysine; alternate mark. Q6 is modified (5-glutamyl dopamine; alternate). At Q6 the chain carries 5-glutamyl serotonin; alternate. A Phosphothreonine; by PKC modification is found at T7. Position 9 is a citrulline; alternate (R9). Residue R9 is modified to Symmetric dimethylarginine; by PRMT5; alternate. An N6,N6,N6-trimethyllysine; alternate modification is found at K10. K10 carries the post-translational modification N6,N6-dimethyllysine; alternate. K10 carries the post-translational modification N6-(2-hydroxyisobutyryl)lysine; alternate. K10 bears the N6-(beta-hydroxybutyryl)lysine; alternate mark. N6-acetyllysine; alternate is present on K10. K10 is modified (N6-methyllysine; alternate). Residue K10 is modified to N6-lactoyllysine; alternate. S11 carries the ADP-ribosylserine; alternate modification. Phosphoserine; alternate; by AURKB, AURKC, RPS6KA3, RPS6KA4 and RPS6KA5 is present on S11. T12 bears the Phosphothreonine; by PKC mark. K15 carries the post-translational modification N6-(2-hydroxyisobutyryl)lysine; alternate. At K15 the chain carries N6-(beta-hydroxybutyryl)lysine; alternate. At K15 the chain carries N6-acetyllysine; alternate. Residue K15 is modified to N6-lactoyllysine; alternate. K15 is modified (N6-glutaryllysine; alternate). K15 is modified (N6-succinyllysine; alternate). R18 is subject to Citrulline; alternate. Position 18 is an asymmetric dimethylarginine; by CARM1; alternate (R18). 2 positions are modified to N6-(2-hydroxyisobutyryl)lysine; alternate: K19 and K24. N6-(beta-hydroxybutyryl)lysine; alternate occurs at positions 19 and 24. K19 and K24 each carry N6-acetyllysine; alternate. N6-methyllysine; alternate occurs at positions 19 and 24. 2 positions are modified to N6-lactoyllysine; alternate: K19 and K24. K19 and K24 each carry N6-glutaryllysine; alternate. N6-butyryllysine; alternate is present on residues K19 and K24. A Citrulline modification is found at R27. An N6,N6,N6-trimethyllysine; alternate modification is found at K28. Position 28 is an N6,N6-dimethyllysine; alternate (K28). An N6-(2-hydroxyisobutyryl)lysine; alternate modification is found at K28. An N6-acetyllysine; alternate modification is found at K28. Position 28 is an N6-methyllysine; alternate (K28). K28 is subject to N6-lactoyllysine; alternate. At K28 the chain carries N6-glutaryllysine; alternate. S29 bears the ADP-ribosylserine; alternate mark. Position 29 is a phosphoserine; alternate; by AURKB, AURKC and RPS6KA5 (S29). At S32 the chain carries Phosphoserine. The residue at position 37 (K37) is an N6,N6,N6-trimethyllysine; alternate. Residue K37 is modified to N6,N6-dimethyllysine; alternate. K37 is subject to N6-(2-hydroxyisobutyryl)lysine; alternate. The residue at position 37 (K37) is an N6-acetyllysine; alternate. Residue K37 is modified to N6-methyllysine; alternate. K38 carries the N6-methyllysine modification. Phosphotyrosine is present on Y42. Position 57 is an N6,N6,N6-trimethyllysine; alternate (K57). N6-(2-hydroxyisobutyryl)lysine; alternate is present on K57. K57 carries the N6-(beta-hydroxybutyryl)lysine; alternate modification. An N6-acetyllysine; alternate modification is found at K57. K57 bears the N6-lactoyllysine; alternate mark. At K57 the chain carries N6-glutaryllysine; alternate. N6-succinyllysine; alternate is present on K57. K57 bears the N6-methyllysine; by EHMT2; alternate mark. S58 bears the Phosphoserine mark. N6-(2-hydroxyisobutyryl)lysine; alternate occurs at positions 65 and 80. N6-methyllysine; alternate occurs at positions 65 and 80. The residue at position 80 (K80) is an N6,N6,N6-trimethyllysine; alternate. K80 carries the N6,N6-dimethyllysine; alternate modification. N6-acetyllysine; alternate is present on K80. K80 carries the post-translational modification N6-lactoyllysine; alternate. K80 is modified (N6-glutaryllysine; alternate). K80 is subject to N6-succinyllysine; alternate. T81 carries the phosphothreonine modification. The residue at position 87 (S87) is a Phosphoserine. T108 bears the Phosphothreonine mark. An N6-acetyllysine; alternate mark is found at K116 and K123. 2 positions are modified to N6-glutaryllysine; alternate: K116 and K123. K123 carries the post-translational modification N6-(2-hydroxyisobutyryl)lysine; alternate. N6-methyllysine; alternate is present on K123. At K123 the chain carries N6-succinyllysine; alternate.

Belongs to the histone H3 family. In terms of assembly, the nucleosome is a histone octamer containing two molecules each of H2A, H2B, H3 and H4 assembled in one H3-H4 heterotetramer and two H2A-H2B heterodimers. The octamer wraps approximately 147 bp of DNA. Acetylation is generally linked to gene activation. Acetylation on Lys-10 (H3K9ac) impairs methylation at Arg-9 (H3R8me2s). Acetylation on Lys-19 (H3K18ac) and Lys-24 (H3K24ac) favors methylation at Arg-18 (H3R17me). Acetylation at Lys-123 (H3K122ac) by EP300/p300 plays a central role in chromatin structure: localizes at the surface of the histone octamer and stimulates transcription, possibly by promoting nucleosome instability. Post-translationally, citrullination at Arg-9 (H3R8ci) and/or Arg-18 (H3R17ci) by PADI4 impairs methylation and represses transcription. In terms of processing, butyrylation of histones marks active promoters and competes with histone acetylation. It is present during late spermatogenesis. Asymmetric dimethylation at Arg-18 (H3R17me2a) by CARM1 is linked to gene activation. Symmetric dimethylation at Arg-9 (H3R8me2s) by PRMT5 is linked to gene repression. Post-translationally, methylation at Lys-5 (H3K4me), Lys-37 and Lys-80 are linked to gene activation. Methylation at Lys-5 (H3K4me) facilitates subsequent acetylation of H3 and H4. Methylation at Lys-80 is associated with DNA double-strand break (DSB) responses and is a specific target for TP53BP1. Methylation at Lys-10 (H3K9me) and Lys-28 (H3K27me) are linked to gene repression. Methylation at Lys-10 (H3K9me) is a specific target for HP1 proteins (CBX1, CBX3 and CBX5) and prevents subsequent phosphorylation at Ser-11 (H3S10ph) and acetylation of H3 and H4. Methylation at Lys-5 (H3K4me) and Lys-80 require preliminary monoubiquitination of H2B at 'Lys-120'. Methylation at Lys-10 (H3K9me) and Lys-28 (H3K27me) are enriched in inactive X chromosome chromatin. Monomethylation at Lys-57 (H3K56me1) by EHMT2/G9A in G1 phase promotes interaction with PCNA and is required for DNA replication. In terms of processing, phosphorylated at Thr-4 (H3T3ph) by HASPIN during prophase and dephosphorylated during anaphase. Phosphorylation at Ser-11 (H3S10ph) by AURKB is crucial for chromosome condensation and cell-cycle progression during mitosis and meiosis. In addition phosphorylation at Ser-11 (H3S10ph) by RPS6KA4 and RPS6KA5 is important during interphase because it enables the transcription of genes following external stimulation, like mitogens, stress, growth factors or UV irradiation and result in the activation of genes, such as c-fos and c-jun. Phosphorylation at Ser-11 (H3S10ph), which is linked to gene activation, prevents methylation at Lys-10 (H3K9me) but facilitates acetylation of H3 and H4. Phosphorylation at Ser-11 (H3S10ph) by AURKB mediates the dissociation of HP1 proteins (CBX1, CBX3 and CBX5) from heterochromatin. Phosphorylation at Ser-11 (H3S10ph) is also an essential regulatory mechanism for neoplastic cell transformation. Phosphorylated at Ser-29 (H3S28ph) by MAP3K20 isoform 1, RPS6KA5 or AURKB during mitosis or upon ultraviolet B irradiation. Phosphorylation at Thr-7 (H3T6ph) by PRKCB is a specific tag for epigenetic transcriptional activation that prevents demethylation of Lys-5 (H3K4me) by LSD1/KDM1A. At centromeres, specifically phosphorylated at Thr-12 (H3T11ph) from prophase to early anaphase, by DAPK3 and PKN1. Phosphorylation at Thr-12 (H3T11ph) by PKN1 or isoform M2 of PKM (PKM2) is a specific tag for epigenetic transcriptional activation that promotes demethylation of Lys-10 (H3K9me) by KDM4C/JMJD2C. Phosphorylation at Tyr-42 (H3Y41ph) by JAK2 promotes exclusion of CBX5 (HP1 alpha) from chromatin. Lysine deamination at Lys-5 (H3K4all) to form allysine is mediated by LOXL2. Allysine formation by LOXL2 only takes place on H3K4me3 and results in gene repression. Post-translationally, succinylation at Lys-80 (H3K79succ) by KAT2A takes place with a maximum frequency around the transcription start sites of genes. It gives a specific tag for epigenetic transcription activation. Desuccinylation at Lys-123 (H3K122succ) by SIRT7 in response to DNA damage promotes chromatin condensation and double-strand breaks (DSBs) repair. In terms of processing, serine ADP-ribosylation constitutes the primary form of ADP-ribosylation of proteins in response to DNA damage. Serine ADP-ribosylation at Ser-11 (H3S10ADPr) is mutually exclusive with phosphorylation at Ser-11 (H3S10ph) and impairs acetylation at Lys-10 (H3K9ac).

Its subcellular location is the nucleus. It is found in the chromosome. Functionally, core component of nucleosome. Nucleosomes wrap and compact DNA into chromatin, limiting DNA accessibility to the cellular machineries which require DNA as a template. Histones thereby play a central role in transcription regulation, DNA repair, DNA replication and chromosomal stability. DNA accessibility is regulated via a complex set of post-translational modifications of histones, also called histone code, and nucleosome remodeling. The polypeptide is Histone H3.3C (Mus musculus (Mouse)).